Consider the following 272-residue polypeptide: Type III pantothenate kinase (272 aa).

Position 6-13 (D6–V13) interacts with ATP. Residue G109 to R112 coordinates substrate. D111 (proton acceptor) is an active-site residue. A K(+)-binding site is contributed by D131. Residue S134 coordinates ATP. Residue T186 participates in substrate binding.

It belongs to the type III pantothenate kinase family. In terms of assembly, homodimer. NH4(+) is required as a cofactor. K(+) serves as cofactor.

Its subcellular location is the cytoplasm. It catalyses the reaction (R)-pantothenate + ATP = (R)-4'-phosphopantothenate + ADP + H(+). It functions in the pathway cofactor biosynthesis; coenzyme A biosynthesis; CoA from (R)-pantothenate: step 1/5. Its function is as follows. Catalyzes the phosphorylation of pantothenate (Pan), the first step in CoA biosynthesis. The chain is Type III pantothenate kinase from Mycobacterium bovis (strain BCG / Pasteur 1173P2).